Consider the following 186-residue polypeptide: Iodotyrosine deiodinase (186 aa).

FMN is bound by residues 11–15, 38–39, and Ser-39; these read RKTVR and PS. The 3-iodo-L-tyrosine site is built by Met-41, Glu-68, Tyr-72, and Lys-92. L-tyrosine is bound by residues Met-41, Glu-68, Tyr-72, and Lys-92. Arg-176 is a binding site for FMN.

Belongs to the nitroreductase family. In terms of assembly, homodimer. FMN serves as cofactor.

It catalyses the reaction 2 iodide + L-tyrosine + 2 NADP(+) = 3,5-diiodo-L-tyrosine + 2 NADPH + H(+). The enzyme catalyses iodide + L-tyrosine + NADP(+) = 3-iodo-L-tyrosine + NADPH. The catalysed reaction is 3-iodo-L-tyrosine + iodide + NADP(+) = 3,5-diiodo-L-tyrosine + NADPH + H(+). It carries out the reaction L-tyrosine + chloride + NADP(+) = 3-chloro-L-tyrosine + NADPH. It catalyses the reaction bromide + L-tyrosine + NADP(+) = 3-bromo-L-tyrosine + NADPH. Its function is as follows. Catalyzes the dehalogenation of halotyrosines such as 3-bromo-L-tyrosine, 3-chloro-L-tyrosine, 3-iodo-L-tyrosine and 3,5-diiodo-L-tyrosine. Activity towards 2-iodophenol is weak. The protein is Iodotyrosine deiodinase of Thermotoga neapolitana (strain ATCC 49049 / DSM 4359 / NBRC 107923 / NS-E).